The following is a 238-amino-acid chain: Uracil-DNA glycosylase (238 aa).

D72 serves as the catalytic Proton acceptor.

This sequence belongs to the uracil-DNA glycosylase (UDG) superfamily. UNG family.

Its subcellular location is the cytoplasm. It catalyses the reaction Hydrolyzes single-stranded DNA or mismatched double-stranded DNA and polynucleotides, releasing free uracil.. In terms of biological role, excises uracil residues from the DNA which can arise as a result of misincorporation of dUMP residues by DNA polymerase or due to deamination of cytosine. The sequence is that of Uracil-DNA glycosylase from Chromobacterium violaceum (strain ATCC 12472 / DSM 30191 / JCM 1249 / CCUG 213 / NBRC 12614 / NCIMB 9131 / NCTC 9757 / MK).